The following is a 312-amino-acid chain: Phosphoribosylaminoimidazole-succinocarboxamide synthase (312 aa).

The protein belongs to the SAICAR synthetase family.

The catalysed reaction is 5-amino-1-(5-phospho-D-ribosyl)imidazole-4-carboxylate + L-aspartate + ATP = (2S)-2-[5-amino-1-(5-phospho-beta-D-ribosyl)imidazole-4-carboxamido]succinate + ADP + phosphate + 2 H(+). The protein operates within purine metabolism; IMP biosynthesis via de novo pathway; 5-amino-1-(5-phospho-D-ribosyl)imidazole-4-carboxamide from 5-amino-1-(5-phospho-D-ribosyl)imidazole-4-carboxylate: step 1/2. The polypeptide is Phosphoribosylaminoimidazole-succinocarboxamide synthase (Legionella pneumophila (strain Paris)).